An 83-amino-acid chain; its full sequence is Conotoxin VnMKLT1-022 (83 aa).

Positions 1–22 are cleaved as a signal peptide; sequence MKLMCMMIVAVLFLTAWTFVTA. A propeptide spanning residues 23–55 is cleaved from the precursor; it reads DDSINGPENRRIWEKLLSKTRDEMKNPEASKLN. Disulfide bonds link cysteine 59–cysteine 74, cysteine 66–cysteine 78, and cysteine 73–cysteine 82.

The protein belongs to the conotoxin O1 superfamily. As to expression, expressed by the venom duct.

It is found in the secreted. This chain is Conotoxin VnMKLT1-022, found in Conus ventricosus (Mediterranean cone).